The following is a 318-amino-acid chain: Pheromone-regulated membrane protein 5 (318 aa).

A helical membrane pass occupies residues 75–98 (GTVFIVVGGIAGVIFLAILLWWVI). Residue serine 129 is modified to Phosphoserine. The segment covering 238-247 (TISSSSASSL) has biased composition (low complexity). Residues 238–318 (TISSSSASSL…HMLEGKEQDE (81 aa)) are disordered. Over residues 250 to 261 (GNEKEVGEDIRK) the composition is skewed to basic and acidic residues. Positions 276-285 (SPESDGSVNR) are enriched in polar residues. 3 positions are modified to phosphoserine: serine 279, serine 282, and serine 288. Over residues 309–318 (HMLEGKEQDE) the composition is skewed to basic and acidic residues. A Glycyl lysine isopeptide (Lys-Gly) (interchain with G-Cter in ubiquitin) cross-link involves residue lysine 314.

Belongs to the PRM5 family.

It localises to the membrane. The protein is Pheromone-regulated membrane protein 5 (PRM5) of Saccharomyces cerevisiae (strain ATCC 204508 / S288c) (Baker's yeast).